Here is a 203-residue protein sequence, read N- to C-terminus: ATP-dependent Clp protease proteolytic subunit 1 (203 aa).

S101 acts as the Nucleophile in catalysis. H126 is an active-site residue.

This sequence belongs to the peptidase S14 family. In terms of assembly, fourteen ClpP subunits assemble into 2 heptameric rings which stack back to back to give a disk-like structure with a central cavity, resembling the structure of eukaryotic proteasomes.

It localises to the cytoplasm. It catalyses the reaction Hydrolysis of proteins to small peptides in the presence of ATP and magnesium. alpha-casein is the usual test substrate. In the absence of ATP, only oligopeptides shorter than five residues are hydrolyzed (such as succinyl-Leu-Tyr-|-NHMec, and Leu-Tyr-Leu-|-Tyr-Trp, in which cleavage of the -Tyr-|-Leu- and -Tyr-|-Trp bonds also occurs).. Its function is as follows. Cleaves peptides in various proteins in a process that requires ATP hydrolysis. Has a chymotrypsin-like activity. Plays a major role in the degradation of misfolded proteins. The sequence is that of ATP-dependent Clp protease proteolytic subunit 1 from Synechococcus sp. (strain JA-2-3B'a(2-13)) (Cyanobacteria bacterium Yellowstone B-Prime).